We begin with the raw amino-acid sequence, 493 residues long: MEKKLKSWQGWLLFCGAMAVVFVLGLVVSSLMERRAETVSVFNNKRVEITGIEARNEVFGENYPRQYETWKETAKTDFKSEFNGNEAVDVLEQRPEMVVLWAGYAFSKDYSTPRGHMHAIEDITHSLRTGAPMDDKSGPQPSTCWTCKSPDVPRMMEAIGVDSFYNNKWGAFGSEIVNPIGCADCHEPTNMKLHISRPALREAFARQGKDIDKATPQEMRSLVCAQCHVEYYFKGDGKYLTFPWDKGFSVEDMEAYYDEADFADYTHALSKARILKAQHPDYEISQMGIHAQRGVSCADCHMPYKSEGGMKFSDHHIQSPLAMIDRTCQVCHRESEETLRNNVYDRQRKANEIRGRLEQELAKAHIEAEFAWDKGATDVQMAEALKLIRQAQWRWDFGVASHGGAFHAPQEIQRILGHGLDKALQARLAISKVLAQHGYTADVPMPDISTKEKAQEYIGLDMEKERKAKGKFLKTIVPEWLEKARANGRLAKL.

Residues 1–25 form the signal peptide; that stretch reads MEKKLKSWQGWLLFCGAMAVVFVLG. Position 116 (His116) interacts with heme c. Residues Cys144, Cys147, and Lys148 each coordinate heme. Heme c contacts are provided by Cys182, Cys185, His186, Cys224, Cys227, and His228. Ca(2+) contacts are provided by Glu230, Tyr231, Lys276, and Gln278. Tyr231 lines the substrate pocket. Residue His279 coordinates substrate. Residues His290, Cys297, Cys300, His301, His315, Cys328, Cys331, His332, and His407 each coordinate heme c.

This sequence belongs to the cytochrome c-552 family. It depends on Ca(2+) as a cofactor. Heme c serves as cofactor.

The protein localises to the periplasm. It catalyses the reaction 6 Fe(III)-[cytochrome c] + NH4(+) + 2 H2O = 6 Fe(II)-[cytochrome c] + nitrite + 8 H(+). It functions in the pathway nitrogen metabolism; nitrate reduction (assimilation). Its function is as follows. Catalyzes the reduction of nitrite to ammonia, consuming six electrons in the process. The chain is Cytochrome c-552 from Bacteroides fragilis (strain YCH46).